The following is a 277-amino-acid chain: L-aspartate oxidase (277 aa).

Arg23 (proton donor/acceptor) is an active-site residue. FAD is bound by residues Glu106 and 122 to 123 (SL). Disordered regions lie at residues 142 to 161 (LRRGWPPPAPPDLSPRPPPA) and 234 to 277 (DYPA…ETRS). The span at 146–161 (WPPPAPPDLSPRPPPA) shows a compositional bias: pro residues.

This sequence belongs to the FAD-dependent oxidoreductase 2 family. NadB subfamily. It depends on FAD as a cofactor.

The protein localises to the cytoplasm. The enzyme catalyses L-aspartate + O2 = iminosuccinate + H2O2. Its pathway is cofactor biosynthesis; NAD(+) biosynthesis; iminoaspartate from L-aspartate (oxidase route): step 1/1. In terms of biological role, catalyzes the oxidation of L-aspartate to iminoaspartate, the first step in the de novo biosynthesis of NAD(+). The sequence is that of L-aspartate oxidase (nadB) from Rhodospirillum rubrum.